Consider the following 73-residue polypeptide: uncharacterized protein (73 aa).

A signal peptide spans 1-21 (MTLFSSLSSLSTGSLKSSVSS). A compositionally biased stretch (low complexity) spans 1–38 (MTLFSSLSSLSTGSLKSSVSSIETGSSSGSFGSNETSG). Residues 1 to 43 (MTLFSSLSSLSTGSLKSSVSSIETGSSSGSFGSNETSGWGSHH) form a disordered region. Asn34 is a glycosylation site (N-linked (GlcNAc...) asparagine).

The protein localises to the secreted. This is an uncharacterized protein from Dictyostelium discoideum (Social amoeba).